Reading from the N-terminus, the 308-residue chain is MANVFVNINDLSNQELLSMIHQALLFKSGQFIPVINRQVVANLFFENSTRTATSFQMAEMKLGYQRIVIDPNKSSATKGESLEDTLKTLKAIGIDTIVIRHSLRDWYQPFYEMAGKEVPKLVNAGDGNGQHPSQSLLDLMTIVEHFENFVGLRVRIIGDIYHSRVARSNAEILNRLGVEVTFSGPKEWQDQSLEQFGSFVGIDKDLGKQDVIMLLRVQHERLTDEENQDFTIDKYHEDYGLTQDRYRKLKSNAIIMHPAPVNRDVEIDSDLVESDKSRIFQQMKNGVYARMAILNSLTIPSLISGVGK.

Residues arginine 50 and threonine 51 each coordinate carbamoyl phosphate. Lysine 78 is a binding site for L-aspartate. Residues arginine 100, histidine 131, and glutamine 134 each contribute to the carbamoyl phosphate site. L-aspartate-binding residues include arginine 164 and arginine 216. Carbamoyl phosphate-binding residues include alanine 259 and proline 260.

The protein belongs to the aspartate/ornithine carbamoyltransferase superfamily. ATCase family. As to quaternary structure, heterododecamer (2C3:3R2) of six catalytic PyrB chains organized as two trimers (C3), and six regulatory PyrI chains organized as three dimers (R2).

It catalyses the reaction carbamoyl phosphate + L-aspartate = N-carbamoyl-L-aspartate + phosphate + H(+). Its pathway is pyrimidine metabolism; UMP biosynthesis via de novo pathway; (S)-dihydroorotate from bicarbonate: step 2/3. Its function is as follows. Catalyzes the condensation of carbamoyl phosphate and aspartate to form carbamoyl aspartate and inorganic phosphate, the committed step in the de novo pyrimidine nucleotide biosynthesis pathway. In Oenococcus oeni (strain ATCC BAA-331 / PSU-1), this protein is Aspartate carbamoyltransferase catalytic subunit.